Consider the following 585-residue polypeptide: MAGUK p55 subfamily member 3 (585 aa).

L27 domains follow at residues glutamate 6–serine 60 and proline 61–valine 118. The PDZ domain occupies isoleucine 137–threonine 218. In terms of domain architecture, SH3 spans glutamate 226 to leucine 296. Serine 307 is subject to Phosphoserine. The Guanylate kinase-like domain maps to serine 385–glutamate 570. Residues lysine 510–glutamine 530 are disordered.

It belongs to the MAGUK family. Interacts with HTR2C; this interaction stabilizes the receptor at the plasma membrane and prevents the desensitization of the HTR2C receptor-mediated calcium response. Interacts with HTR2A. Interacts with HTR4. Interacts (via PDZ domain) with CADM1 (via C-terminus)Interacts (via PDZ domain) with CADM1; this interaction connects CADM1 with DLG1. Interacts (via Guanylate kinase-like domain) with PALS1. Interacts with DLG1 (via N-terminus); this interaction connects CADM1 with DLG1 and links CADM1 with the regulatory subunit of phosphoinositide-3-kinase (PI3K) by forming a multiprotein complex and participates in cell spreading.

Its subcellular location is the apical cell membrane. It localises to the cell membrane. The protein localises to the cell junction. The protein resides in the adherens junction. Participates in cell spreading through the phosphoinositide-3-kinase (PI3K) pathway by connecting CADM1 to DLG1 and the regulatory subunit of phosphoinositide-3-kinase (PI3K). Stabilizes HTR2C at the plasma membrane and prevents its desensitization. May participates in the maintenance of adherens junctions. The sequence is that of MAGUK p55 subfamily member 3 from Rattus norvegicus (Rat).